Here is a 256-residue protein sequence, read N- to C-terminus: Thiazole synthase (256 aa).

The active-site Schiff-base intermediate with DXP is lysine 95. Residues glycine 156, 182–183 (AG), and 204–205 (NT) each bind 1-deoxy-D-xylulose 5-phosphate.

Belongs to the ThiG family. Homotetramer. Forms heterodimers with either ThiH or ThiS.

The protein resides in the cytoplasm. It carries out the reaction [ThiS sulfur-carrier protein]-C-terminal-Gly-aminoethanethioate + 2-iminoacetate + 1-deoxy-D-xylulose 5-phosphate = [ThiS sulfur-carrier protein]-C-terminal Gly-Gly + 2-[(2R,5Z)-2-carboxy-4-methylthiazol-5(2H)-ylidene]ethyl phosphate + 2 H2O + H(+). It functions in the pathway cofactor biosynthesis; thiamine diphosphate biosynthesis. Catalyzes the rearrangement of 1-deoxy-D-xylulose 5-phosphate (DXP) to produce the thiazole phosphate moiety of thiamine. Sulfur is provided by the thiocarboxylate moiety of the carrier protein ThiS. In vitro, sulfur can be provided by H(2)S. The chain is Thiazole synthase from Escherichia coli (strain 55989 / EAEC).